The primary structure comprises 176 residues: Urease accessory protein UreE (176 aa).

The interval 147-176 is disordered; it reads AGAYQQGGGHSHGHAHSHSHEKPHSHTHNH.

It belongs to the UreE family.

Its subcellular location is the cytoplasm. Functionally, involved in urease metallocenter assembly. Binds nickel. Probably functions as a nickel donor during metallocenter assembly. This Alcanivorax borkumensis (strain ATCC 700651 / DSM 11573 / NCIMB 13689 / SK2) protein is Urease accessory protein UreE.